A 323-amino-acid chain; its full sequence is Putative divalent cation/proton antiporter TMEM165 (323 aa).

The first 33 residues, 1–33, serve as a signal peptide directing secretion; sequence MAASARGSGRAPTRRLLVLLLLPLLWAPAGVRA. The Lumenal portion of the chain corresponds to 34–88; that stretch reads GPEEDLSHRNQEPPAPAQQLQPQPAAVQGLEPARAEKGFTPAAPVHTNREDAATQ. Over residues 35–44 the composition is skewed to basic and acidic residues; it reads PEEDLSHRNQ. A disordered region spans residues 35–60; it reads PEEDLSHRNQEPPAPAQQLQPQPAAV. Positions 50-59 are enriched in low complexity; it reads AQQLQPQPAA. The chain crosses the membrane as a helical span at residues 89–109; that stretch reads ANLGFIHAFVAAISVIIVSEL. The Cytoplasmic segment spans residues 110–126; the sequence is GDKTFFIAAIMAMRYNR. A helical membrane pass occupies residues 127–147; that stretch reads LTVLAGAMLALALMTCLSVLF. The Lumenal portion of the chain corresponds to 148 to 151; sequence GYAT. Residues 152–172 form a helical membrane-spanning segment; that stretch reads TVIPRVYTYYVSTALFAIFGI. Topologically, residues 173-227 are cytoplasmic; it reads RMLREGLKMSPDEGQEELEEVQAELKKKDEEFQRTKLLNGPDVETGTSTAIPQKK. Residues 184 to 211 adopt a coiled-coil conformation; that stretch reads DEGQEELEEVQAELKKKDEEFQRTKLLN. A helical transmembrane segment spans residues 228 to 248; that stretch reads WLHFISPIFVQALTLTFLAEW. Residues 249–266 lie on the Lumenal side of the membrane; sequence GDRSQLTTIVLAAREDPY. A helical transmembrane segment spans residues 267–287; the sequence is GVAVGGTVGHCLCTGLAVIGG. At 288-298 the chain is on the cytoplasmic side; the sequence is RMIAQKISVRT. The chain crosses the membrane as a helical span at residues 299-319; it reads VTIIGGIVFLAFAFSALFISP. The Lumenal segment spans residues 320–323; that stretch reads ESGF.

This sequence belongs to the GDT1 family.

The protein resides in the golgi apparatus membrane. It catalyses the reaction Ca(2+)(in) + n H(+)(out) = Ca(2+)(out) + n H(+)(in). The catalysed reaction is Mn(2+)(in) + n H(+)(out) = Mn(2+)(out) + n H(+)(in). Its function is as follows. Putative divalent cation:proton antiporter that exchanges calcium or manganese ions for protons across the Golgi membrane. Mediates the reversible transport of calcium or manganese to the Golgi lumen driven by the proton gradient and possibly the membrane potential generated by V-ATPase. Provides calcium or manganese cofactors to resident Golgi enzymes and contributes to the maintenance of an acidic luminal Golgi pH required for proper functioning of the secretory pathway. Promotes Ca(2+) storage within the Golgi lumen of the mammary epithelial cells to be then secreted into milk. The transport mechanism and stoichiometry remains to be elucidated. This is Putative divalent cation/proton antiporter TMEM165 from Rattus norvegicus (Rat).